Here is a 362-residue protein sequence, read N- to C-terminus: Serine/threonine-protein kinase SBK2 (362 aa).

The span at 1 to 11 shows a compositional bias: basic and acidic residues; that stretch reads MPGKQSEDKPM. Residues 1–26 are disordered; that stretch reads MPGKQSEDKPMEVSTVEDGGDEGLGG. The region spanning 62-330 is the Protein kinase domain; sequence YEEVRPLGQG…IKSYLGQPWK (269 aa). ATP is bound by residues 68–76 and Lys-91; that span reads LGQGRFGRV. The active-site Proton acceptor is the Asp-183. A disordered region spans residues 329–362; it reads WKQREGEAEELATELREDGWRGGQEAAKGEQPAC.

It belongs to the protein kinase superfamily. Ser/Thr protein kinase family. STKL subfamily.

The enzyme catalyses L-seryl-[protein] + ATP = O-phospho-L-seryl-[protein] + ADP + H(+). It carries out the reaction L-threonyl-[protein] + ATP = O-phospho-L-threonyl-[protein] + ADP + H(+). The protein is Serine/threonine-protein kinase SBK2 (Sbk2) of Mus musculus (Mouse).